Reading from the N-terminus, the 63-residue chain is Large ribosomal subunit protein uL30 (63 aa).

It belongs to the universal ribosomal protein uL30 family. Part of the 50S ribosomal subunit.

This Methylobacterium sp. (strain 4-46) protein is Large ribosomal subunit protein uL30.